The primary structure comprises 430 residues: S-adenosylmethionine synthase (430 aa).

ATP is bound at residue His-14. Asp-16 contacts Mg(2+). Glu-42 is a K(+) binding site. Positions 55 and 98 each coordinate L-methionine. The flexible loop stretch occupies residues Gln-98–Arg-108. Residues Asp-164–Lys-166, Lys-254–Phe-255, Asp-263, Arg-269–Lys-270, Ala-286, and Lys-290 contribute to the ATP site. L-methionine is bound at residue Asp-263. L-methionine is bound at residue Lys-294.

Belongs to the AdoMet synthase family. As to quaternary structure, homotetramer; dimer of dimers. Mg(2+) is required as a cofactor. K(+) serves as cofactor.

It is found in the cytoplasm. The catalysed reaction is L-methionine + ATP + H2O = S-adenosyl-L-methionine + phosphate + diphosphate. It functions in the pathway amino-acid biosynthesis; S-adenosyl-L-methionine biosynthesis; S-adenosyl-L-methionine from L-methionine: step 1/1. Its function is as follows. Catalyzes the formation of S-adenosylmethionine (AdoMet) from methionine and ATP. The overall synthetic reaction is composed of two sequential steps, AdoMet formation and the subsequent tripolyphosphate hydrolysis which occurs prior to release of AdoMet from the enzyme. The chain is S-adenosylmethionine synthase from Phocaeicola vulgatus (strain ATCC 8482 / DSM 1447 / JCM 5826 / CCUG 4940 / NBRC 14291 / NCTC 11154) (Bacteroides vulgatus).